Consider the following 154-residue polypeptide: Myoglobin (154 aa).

Positions 2-148 constitute a Globin domain; sequence GLSDGEWQLV…FRKDMASNYK (147 aa). Phosphoserine is present on Ser4. His65 lines the nitrite pocket. Position 65 (His65) interacts with O2. At Thr68 the chain carries Phosphothreonine. A heme b-binding site is contributed by His94.

It belongs to the globin family. Monomeric.

Its subcellular location is the cytoplasm. The protein localises to the sarcoplasm. The enzyme catalyses Fe(III)-heme b-[protein] + nitric oxide + H2O = Fe(II)-heme b-[protein] + nitrite + 2 H(+). The catalysed reaction is H2O2 + AH2 = A + 2 H2O. Monomeric heme protein which primary function is to store oxygen and facilitate its diffusion within muscle tissues. Reversibly binds oxygen through a pentacoordinated heme iron and enables its timely and efficient release as needed during periods of heightened demand. Depending on the oxidative conditions of tissues and cells, and in addition to its ability to bind oxygen, it also has a nitrite reductase activity whereby it regulates the production of bioactive nitric oxide. Under stress conditions, like hypoxia and anoxia, it also protects cells against reactive oxygen species thanks to its pseudoperoxidase activity. The protein is Myoglobin (MB) of Gorilla gorilla beringei (Mountain gorilla).